The sequence spans 383 residues: Succinyl-diaminopimelate desuccinylase (383 aa).

Zn(2+) is bound at residue His-73. The active site involves Asp-75. Zn(2+) is bound at residue Asp-107. Residue Glu-141 is the Proton acceptor of the active site. 3 residues coordinate Zn(2+): Glu-142, Glu-170, and His-356.

This sequence belongs to the peptidase M20A family. DapE subfamily. In terms of assembly, homodimer. The cofactor is Zn(2+). It depends on Co(2+) as a cofactor.

The catalysed reaction is N-succinyl-(2S,6S)-2,6-diaminopimelate + H2O = (2S,6S)-2,6-diaminopimelate + succinate. It participates in amino-acid biosynthesis; L-lysine biosynthesis via DAP pathway; LL-2,6-diaminopimelate from (S)-tetrahydrodipicolinate (succinylase route): step 3/3. Catalyzes the hydrolysis of N-succinyl-L,L-diaminopimelic acid (SDAP), forming succinate and LL-2,6-diaminopimelate (DAP), an intermediate involved in the bacterial biosynthesis of lysine and meso-diaminopimelic acid, an essential component of bacterial cell walls. The chain is Succinyl-diaminopimelate desuccinylase from Pseudomonas putida (strain W619).